Reading from the N-terminus, the 170-residue chain is MVRLLLIFVLILSCVPKQEHPLMHNLEPSGEADFKVIELRVPEYLDTERIMYKTDKGFYYFAKNVWVCELSCVLENYFKKAQGGEEKVYLEVLDFYPVFTGKKEGYVYLRARVDRKKEYVYKIPFKVRSFEEIILKMNEAVNRLLEDVNKYVQITTSSKSISDSGLPTPP.

This is an uncharacterized protein from Aquifex aeolicus (strain VF5).